Here is a 321-residue protein sequence, read N- to C-terminus: 2-oxoglutarate-dependent dioxygenase frbH (321 aa).

Positions 77-97 (SRNSDTHGYEPVATSTGAQDD) are disordered. The 105-residue stretch at 169–273 (ESLSTLSMFR…RFSIAYFLRA (105 aa)) folds into the Fe2OG dioxygenase domain. 3 residues coordinate Fe cation: His-194, Asp-196, and His-251. Arg-264 is a 2-oxoglutarate binding site.

It belongs to the iron/ascorbate-dependent oxidoreductase family.

The protein operates within antifungal biosynthesis. Functionally, 2-oxoglutarate-dependent dioxygenase; part of the gene cluster that mediates the biosynthesis of the antifungal antibiotic FR901469, an inhibitor of beta-1,3-glucansynthase, exerting antifungal activity against the pathogenes Candida albicans and Aspergillus fumigatus. FR901469 is a cyclic depsipeptide containing 12 amino acid residues and a fatty acid chain. The NRPS frbI contains 12 modules responsible for the formation of the depsipeptide backbone which is denoted as Acyl-Thr-Ala-Tyr-Val-4OHPro-Thr-Thr-3OHPro-threo3OHGln-Gly-Thr-Orn-OH (C71H116N14O23). The PKS frbB is probably involved in the production of the hydrocarbon chain, and the acyl-CoA ligase frbC might be involved in the transport of the chain to the peptide ptoduct of frbI. Because FR901469 contains 3 hydroxylated amino acid residues, the 3 oxygenases frbA, frbH, and frbJ might be participating in amino acid hydroxylation. As no thioesterase domains were detected in frbI or frbB, the thioesterases frbD and frbE may instead release and cyclize the products of the NRPS and PKS, respectively. In Dothideomycetidae sp. (strain 11243) (Fungal sp. (strain No.11243)), this protein is 2-oxoglutarate-dependent dioxygenase frbH.